The sequence spans 65 residues: U11-theraphotoxin-Cg1b (65 aa).

The signal sequence occupies residues 1–21 (MKTTILVVILGLTLLFALSAA). Residues 22–29 (TELKDEER) constitute a propeptide that is removed on maturation. Cystine bridges form between Cys-31–Cys-45, Cys-38–Cys-50, and Cys-44–Cys-57.

It belongs to the neurotoxin 10 (Hwtx-1) family. 32 (Jztx-16) subfamily. In terms of tissue distribution, expressed by the venom gland.

The protein resides in the secreted. Its function is as follows. Probable ion channel inhibitor. The sequence is that of U11-theraphotoxin-Cg1b from Chilobrachys guangxiensis (Chinese earth tiger tarantula).